A 412-amino-acid chain; its full sequence is O-acetyl-L-homoserine sulfhydrylase 2 (412 aa).

Lysine 202 carries the N6-(pyridoxal phosphate)lysine modification.

Belongs to the trans-sulfuration enzymes family. Homotetramer. The cofactor is pyridoxal 5'-phosphate.

The enzyme catalyses O-acetyl-L-homoserine + hydrogen sulfide = L-homocysteine + acetate. Its activity is regulated as follows. Inhibited by the carbonyl reagents hydroxylamine and phenylhydrazine. Also inhibited by methionine and propargylglycine. Functionally, catalyzes the conversion of O-acetyl-L-homoserine (OAH) into homocysteine in the methionine biosynthesis pathway. Has weak activity with O-acetyl-L-serine, O-phospho-L-serine, L-serine, O-succinyl-L-homoserine and L-homoserine. Shows a very low CTT gamma-synthase activity. The chain is O-acetyl-L-homoserine sulfhydrylase 2 from Thermus thermophilus (strain ATCC 27634 / DSM 579 / HB8).